We begin with the raw amino-acid sequence, 249 residues long: Small ribosomal subunit protein eS6 (249 aa).

The span at 216 to 229 (RMKEAKEKRQEQIA) shows a compositional bias: basic and acidic residues. The tract at residues 216 to 249 (RMKEAKEKRQEQIAKRRRLSSLRASTSKSESSQK) is disordered. A phosphoserine mark is found at Ser-235, Ser-236, Ser-240, Ser-244, and Ser-247. Residues 236–249 (SLRASTSKSESSQK) show a composition bias toward low complexity.

The protein belongs to the eukaryotic ribosomal protein eS6 family. In terms of assembly, component of the small ribosomal subunit. Ribosomal protein S6 is the major substrate of protein kinases in eukaryote ribosomes. The phosphorylation is stimulated by growth factors, tumor promoting agents, and mitogens. It is dephosphorylated at growth arrest.

The protein resides in the cytoplasm. Component of the 40S small ribosomal subunit. Plays an important role in controlling cell growth and proliferation through the selective translation of particular classes of mRNA. This is Small ribosomal subunit protein eS6 (rps6) from Oncorhynchus mykiss (Rainbow trout).